The following is a 514-amino-acid chain: HMG box-containing protein 1 (514 aa).

The disordered stretch occupies residues 150-182 (ARPPPVSSSSKSEPAFPHHHWKEETPVRHERAN). Residues 170-182 (WKEETPVRHERAN) are compositionally biased toward basic and acidic residues. The region spanning 203–345 (WCNSWPSTVW…PPGHPDAINF (143 aa)) is the AXH domain. The HMG box DNA-binding region spans 434–502 (CKRPMNAFML…EQKRLNPDCW (69 aa)).

Binds the second PAH repeat of SIN3A. Binds TCF4. Binds RB1. Ubiquitinated by the CTLH E3 ubiquitin-protein ligase complex, leading to subsequent proteasomal degradation.

It localises to the nucleus. Transcriptional repressor that binds to the promoter region of target genes. Plays a role in the regulation of the cell cycle and of the Wnt pathway. Binds preferentially to the sequence 5'-TTCATTCATTCA-3'. Binding to the histone H1.0 promoter is enhanced by interaction with RB1. Disrupts the interaction between DNA and TCF4. The sequence is that of HMG box-containing protein 1 (HBP1) from Homo sapiens (Human).